The chain runs to 88 residues: Eclosion hormone (88 aa).

An N-terminal signal peptide occupies residues 1 to 26 (MANKLTAVIVVALAVAFMVNLDYANC). 3 cysteine pairs are disulfide-bonded: Cys40-Cys64, Cys44-Cys60, and Cys47-Cys75.

Belongs to the insect eclosion hormone family.

Its subcellular location is the secreted. In terms of biological role, neuropeptide that triggers the performance of ecdysis behaviors at the end of a molt. It triggers adult behavior patterns: larval, pupal and adult ecdysis, and plasticization during the molt. In Bombyx mori (Silk moth), this protein is Eclosion hormone.